Here is an 840-residue protein sequence, read N- to C-terminus: Translation initiation factor IF-2 (840 aa).

The segment covering 95–143 has biased composition (basic and acidic residues); that stretch reads RSPDEIEAERQRELEEQRAAEEAERLKAEEAAARQRAEEEARKAEEAAR. 2 disordered regions span residues 95-155 and 173-256; these read RSPD…ATAG and PAAV…PTGP. A compositionally biased stretch (low complexity) spans 144–155; it reads AKAAQEAAATAG. Basic and acidic residues-rich tracts occupy residues 175-191 and 223-232; these read AVEE…PKRD and STDEESDGYR. Residues 233–247 are compositionally biased toward basic residues; the sequence is RGGRGGKSKLKKRNQ. The tr-type G domain maps to 340 to 509; it reads TRAPVVTVMG…LLQAEVLELK (170 aa). Residues 349-356 form a G1 region; that stretch reads GHVDHGKT. 349-356 lines the GTP pocket; it reads GHVDHGKT. Residues 374–378 form a G2 region; that stretch reads GITQH. The tract at residues 395 to 398 is G3; sequence DTPG. Residues 395-399 and 449-452 each bind GTP; these read DTPGH and NKID. The G4 stretch occupies residues 449 to 452; sequence NKID. The tract at residues 485 to 487 is G5; that stretch reads SAK.

The protein belongs to the TRAFAC class translation factor GTPase superfamily. Classic translation factor GTPase family. IF-2 subfamily.

The protein localises to the cytoplasm. Its function is as follows. One of the essential components for the initiation of protein synthesis. Protects formylmethionyl-tRNA from spontaneous hydrolysis and promotes its binding to the 30S ribosomal subunits. Also involved in the hydrolysis of GTP during the formation of the 70S ribosomal complex. The sequence is that of Translation initiation factor IF-2 from Pseudomonas aeruginosa (strain ATCC 15692 / DSM 22644 / CIP 104116 / JCM 14847 / LMG 12228 / 1C / PRS 101 / PAO1).